We begin with the raw amino-acid sequence, 552 residues long: MAEKQKHDGRVKIGHYVLGDTLGVGTFGKVKIGEHQLTGHKVAVKILNRQKIRSLDVVGKIKREIQNLKLFRHPHIIKLYQVISTPTDFFMVMEYVSGGELFDYICKHGRVEEVEARRLFQQILSAVDYCHRHMVVHRDLKPENVLLDAQMNAKIADFGLSNMMSDGEFLRTSCGSPNYAAPEVISGRLYAGPEVDIWSCGVILYALLCGTLPFDDEHVPTLFKKIRGGVFYIPDYLNRSVATLLMHMLQVDPLKRATIKDIREHEWFKQDLPSYLFPEDPSYDANVIDDEAVKEVCEKFECTESEVMNSLYSGDPQDQLAVAYHLIIDNRRIMNQASEFYLASSPPSGSFMDDSAMHIPPGLKPHPERMPPLIADSPKARCPLDALNTTKPKSLAVKKAKWHLGIRSQSKACDIMAEVYRAMKQLGFEWKVVNAYHLRVRRKNPVTGNYVKMSLQLYLVDSRSYLLDFKSIDDEVVEQRSGSSTPQRSCSAAGLHRARSSFDSSTAENHSLSGSLTGSLTGSTLSSASPRLGSHTMDFFEMCASLITALAR.

Residues Tyr16–Phe268 enclose the Protein kinase domain. Residues Leu22 to Val30 and Lys45 contribute to the ATP site. Catalysis depends on Asp139, which acts as the Proton acceptor. At Thr172 the chain carries Phosphothreonine; by LKB1 and CaMKK2. Position 258 is a phosphothreonine (Thr258). The AIS stretch occupies residues Glu291–Asp376. Residues Ser377 and Ser491 each carry the phosphoserine modification.

It belongs to the protein kinase superfamily. CAMK Ser/Thr protein kinase family. SNF1 subfamily. In terms of assembly, AMPK is a heterotrimer of an alpha catalytic subunit (PRKAA1 or PRKAA2), a beta (PRKAB1 or PRKAB2) and a gamma non-catalytic subunits (PRKAG1, PRKAG2 or PRKAG3). Interacts with FNIP1 and FNIP2. Interacts with DUSP29. Interacts with ARF6. The phosphorylated form at Thr-172 mediated by CamKK2 interacts with ACSS2. Requires Mg(2+) as cofactor. In terms of processing, ubiquitinated. Phosphorylated at Thr-172 by STK11/LKB1 in complex with STE20-related adapter-alpha (STRADA) pseudo kinase and CAB39. Also phosphorylated at Thr-172 by CAMKK2; triggered by a rise in intracellular calcium ions, without detectable changes in the AMP/ATP ratio. CAMKK1 can also phosphorylate Thr-172, but at much lower level. Dephosphorylated by protein phosphatase 2A and 2C (PP2A and PP2C). Phosphorylated by ULK1; leading to negatively regulate AMPK activity and suggesting the existence of a regulatory feedback loop between ULK1 and AMPK. Dephosphorylated by PPM1A and PPM1B at Thr-172 (mediated by STK11/LKB1).

It localises to the cytoplasm. It is found in the nucleus. The enzyme catalyses L-seryl-[protein] + ATP = O-phospho-L-seryl-[protein] + ADP + H(+). It catalyses the reaction L-threonyl-[protein] + ATP = O-phospho-L-threonyl-[protein] + ADP + H(+). It carries out the reaction L-seryl-[acetyl-CoA carboxylase] + ATP = O-phospho-L-seryl-[acetyl-CoA carboxylase] + ADP + H(+). The catalysed reaction is L-seryl-[3-hydroxy-3-methylglutaryl-coenzyme A reductase] + ATP = O-phospho-L-seryl-[3-hydroxy-3-methylglutaryl-coenzyme A reductase] + ADP + H(+). Activated by phosphorylation on Thr-172. Binding of AMP to non-catalytic gamma subunit (PRKAG1, PRKAG2 or PRKAG3) results in allosteric activation, inducing phosphorylation on Thr-172. AMP-binding to gamma subunit also sustains activity by preventing dephosphorylation of Thr-172. ADP also stimulates Thr-172 phosphorylation, without stimulating already phosphorylated AMPK. ATP promotes dephosphorylation of Thr-172, rendering the enzyme inactive. Under physiological conditions AMPK mainly exists in its inactive form in complex with ATP, which is much more abundant than AMP. Selectively inhibited by compound C (6-[4-(2-Piperidin-1-yl-ethoxy)-phenyl)]-3-pyridin-4-yl-pyyrazolo[1,5-a] pyrimidine. Activated by resveratrol, a natural polyphenol present in red wine, and S17834, a synthetic polyphenol. Salicylate/aspirin directly activates kinase activity, primarily by inhibiting Thr-172 dephosphorylation. Catalytic subunit of AMP-activated protein kinase (AMPK), an energy sensor protein kinase that plays a key role in regulating cellular energy metabolism. In response to reduction of intracellular ATP levels, AMPK activates energy-producing pathways and inhibits energy-consuming processes: inhibits protein, carbohydrate and lipid biosynthesis, as well as cell growth and proliferation. AMPK acts via direct phosphorylation of metabolic enzymes, and by longer-term effects via phosphorylation of transcription regulators. Regulates lipid synthesis by phosphorylating and inactivating lipid metabolic enzymes such as ACACA, ACACB, GYS1, HMGCR and LIPE; regulates fatty acid and cholesterol synthesis by phosphorylating acetyl-CoA carboxylase (ACACA and ACACB) and hormone-sensitive lipase (LIPE) enzymes, respectively. Promotes lipolysis of lipid droplets by mediating phosphorylation of isoform 1 of CHKA (CHKalpha2). Regulates insulin-signaling and glycolysis by phosphorylating IRS1, PFKFB2 and PFKFB3. Involved in insulin receptor/INSR internalization. AMPK stimulates glucose uptake in muscle by increasing the translocation of the glucose transporter SLC2A4/GLUT4 to the plasma membrane, possibly by mediating phosphorylation of TBC1D4/AS160. Regulates transcription and chromatin structure by phosphorylating transcription regulators involved in energy metabolism such as CRTC2/TORC2, FOXO3, histone H2B, HDAC5, MEF2C, MLXIPL/ChREBP, EP300, HNF4A, p53/TP53, SREBF1, SREBF2 and PPARGC1A. Acts as a key regulator of glucose homeostasis in liver by phosphorylating CRTC2/TORC2, leading to CRTC2/TORC2 sequestration in the cytoplasm. In response to stress, phosphorylates 'Ser-36' of histone H2B (H2BS36ph), leading to promote transcription. Acts as a key regulator of cell growth and proliferation by phosphorylating FNIP1, TSC2, RPTOR, WDR24 and ATG1/ULK1: in response to nutrient limitation, negatively regulates the mTORC1 complex by phosphorylating RPTOR component of the mTORC1 complex and by phosphorylating and activating TSC2. Also phosphorylates and inhibits GATOR2 subunit WDR24 in response to nutrient limitation, leading to suppress glucose-mediated mTORC1 activation. In response to energetic stress, phosphorylates FNIP1, inactivating the non-canonical mTORC1 signaling, thereby promoting nuclear translocation of TFEB and TFE3, and inducing transcription of lysosomal or autophagy genes. In response to nutrient limitation, promotes autophagy by phosphorylating and activating ATG1/ULK1. In that process, it also activates WDR45/WIPI4. Phosphorylates CASP6, thereby preventing its autoprocessing and subsequent activation. AMPK also acts as a regulator of circadian rhythm by mediating phosphorylation of CRY1, leading to destabilize it. May regulate the Wnt signaling pathway by phosphorylating CTNNB1, leading to stabilize it. Also acts as a regulator of cellular polarity by remodeling the actin cytoskeleton; probably by indirectly activating myosin. Also phosphorylates CFTR, EEF2K, KLC1, NOS3 and SLC12A1. Plays an important role in the differential regulation of pro-autophagy (composed of PIK3C3, BECN1, PIK3R4 and UVRAG or ATG14) and non-autophagy (composed of PIK3C3, BECN1 and PIK3R4) complexes, in response to glucose starvation. Can inhibit the non-autophagy complex by phosphorylating PIK3C3 and can activate the pro-autophagy complex by phosphorylating BECN1. Upon glucose starvation, promotes ARF6 activation in a kinase-independent manner leading to cell migration. Upon glucose deprivation mediates the phosphorylation of ACSS2 at 'Ser-659', which exposes the nuclear localization signal of ACSS2, required for its interaction with KPNA1 and nuclear translocation. Upon stress, regulates mitochondrial fragmentation through phosphorylation of MTFR1L. This Mus musculus (Mouse) protein is 5'-AMP-activated protein kinase catalytic subunit alpha-2.